Here is a 173-residue protein sequence, read N- to C-terminus: DNA N-6-adenine-methyltransferase (173 aa).

The protein belongs to the N(4)/N(6)-methyltransferase family.

The catalysed reaction is a 2'-deoxyadenosine in DNA + S-adenosyl-L-methionine = an N(6)-methyl-2'-deoxyadenosine in DNA + S-adenosyl-L-homocysteine + H(+). Functionally, methyltransferase that methylates adenine residues in the ssDNA and dsDNA sequence 5'-GATC-3'. May prevent degradation of viral DNA by the host restriction-modification antiviral defense system. This chain is DNA N-6-adenine-methyltransferase, found in Haemophilus influenzae (Bacteriophage HP1).